A 67-amino-acid chain; its full sequence is Large ribosomal subunit protein bL35 (67 aa).

It belongs to the bacterial ribosomal protein bL35 family.

In Dehalococcoides mccartyi (strain ATCC BAA-2100 / JCM 16839 / KCTC 5957 / BAV1), this protein is Large ribosomal subunit protein bL35.